Consider the following 216-residue polypeptide: 3,4-dihydroxy-2-butanone 4-phosphate synthase (216 aa).

D-ribulose 5-phosphate is bound by residues 33–34 (RE), aspartate 38, 146–150 (RRGHT), and glutamate 170. Glutamate 34 lines the Mg(2+) pocket. Histidine 149 provides a ligand contact to Mg(2+).

It belongs to the DHBP synthase family. As to quaternary structure, homodimer. Requires Mg(2+) as cofactor. Mn(2+) serves as cofactor.

It carries out the reaction D-ribulose 5-phosphate = (2S)-2-hydroxy-3-oxobutyl phosphate + formate + H(+). Its pathway is cofactor biosynthesis; riboflavin biosynthesis; 2-hydroxy-3-oxobutyl phosphate from D-ribulose 5-phosphate: step 1/1. Catalyzes the conversion of D-ribulose 5-phosphate to formate and 3,4-dihydroxy-2-butanone 4-phosphate. The polypeptide is 3,4-dihydroxy-2-butanone 4-phosphate synthase (Pseudomonas putida (strain ATCC 47054 / DSM 6125 / CFBP 8728 / NCIMB 11950 / KT2440)).